A 457-amino-acid polypeptide reads, in one-letter code: Cell division cycle 20.1, cofactor of APC complex (457 aa).

WD repeat units lie at residues 138 to 175, 180 to 219, 223 to 260, 264 to 303, 312 to 354, 356 to 397, and 400 to 439; these read VDDFYLNLLDWGSANVLAIALDHTVYLWDASTGSTSEL, EEKGPVTSINWAPDGRHVAVGLNNSEVQLWDSASNRQLRT, GHQSRVGSLAWNNHILTTGGMDGLIINNDVRIRSPIVE, GHTQEVCGLKWSGSGQQLASGGNDNVVHIWDRSVASSNST, EHTS…CLNS, DTGS…KMAE, and GHTSRVLYMAQSPDGCTVASAAGDETLRFWNVFGVPETAK.

It belongs to the WD repeat CDC20/Fizzy family. In terms of assembly, the APC/C is composed of at least 11 subunits that stay tightly associated throughout the cell cycle. Interacts with APC10, FZR1, FZR2, FZR3. Binds to GIG1 and PYM. Part of the mitotic checkpoint complex (MCC); interacts with MAD2, BUB3.1, BUBR1 and BUB1. Binds to cyclins CYCA1-2, CYCB2-1 and CYCB2-2. Interacts with PANS1. As to expression, expressed in meristems and organ primordia. Present in flowers, leaves, stems, roots, pollen grains and developing seeds.

The protein localises to the nucleus. Its pathway is protein modification; protein ubiquitination. Functionally, component of the anaphase promoting complex/cyclosome (APC/C), a cell cycle-regulated E3 ubiquitin-protein ligase complex that controls progression through mitosis and the G1 phase of the cell cycle. In Arabidopsis thaliana (Mouse-ear cress), this protein is Cell division cycle 20.1, cofactor of APC complex (CDC20-1).